An 89-amino-acid polypeptide reads, in one-letter code: Small ribosomal subunit protein uS15 (89 aa).

The protein belongs to the universal ribosomal protein uS15 family. Part of the 30S ribosomal subunit. Forms a bridge to the 50S subunit in the 70S ribosome, contacting the 23S rRNA.

Its function is as follows. One of the primary rRNA binding proteins, it binds directly to 16S rRNA where it helps nucleate assembly of the platform of the 30S subunit by binding and bridging several RNA helices of the 16S rRNA. In terms of biological role, forms an intersubunit bridge (bridge B4) with the 23S rRNA of the 50S subunit in the ribosome. This Photorhabdus luminescens (Xenorhabdus luminescens) protein is Small ribosomal subunit protein uS15.